The chain runs to 433 residues: MNNSEIININGPFKGEIEVPGDKSMTHRAIMLASLAKGISTIYEPLMGEDCRRTMDIFKLLGVTIEEQDNSIIINSPGYQNFITPHQVLYTGNSGTTTRLLAGLLSGLGIESVLSGDVSIGKRPMDRVMKPLLKMNANISGIDNNYTPLIIKPSTIKGINYQMEVASAQVKSAILLASLFSKEATTLTEFDVSRNHTETLFAHFNIPISIQGKTIQTIPYAIEHIQPRDFHVPGDISSAAFFIVAALITPGSDITIHNVGINPTRSGIIDIVKQMGGNIELSNVSKGAEPTASIHVKYTPNLNAVTIKGDLVPRAIDELPVIALLCTQASNSCIIKNAEELKVKETNRIDTTADMLNLLGFNLQPTHDGLIIHPSEFRSNATVDSQTDHRIGMMLAVASLLSSEPLKIEQFDAVNVSFPGFLPKLKLLENEGK.

3-phosphoshikimate contacts are provided by Lys23, Ser24, and Arg28. Lys23 is a binding site for phosphoenolpyruvate. Phosphoenolpyruvate contacts are provided by Gly95 and Arg123. Positions 167, 169, 317, and 344 each coordinate 3-phosphoshikimate. Phosphoenolpyruvate is bound at residue Gln169. Asp317 functions as the Proton acceptor in the catalytic mechanism. Positions 348 and 390 each coordinate phosphoenolpyruvate.

This sequence belongs to the EPSP synthase family. As to quaternary structure, monomer.

Its subcellular location is the cytoplasm. The enzyme catalyses 3-phosphoshikimate + phosphoenolpyruvate = 5-O-(1-carboxyvinyl)-3-phosphoshikimate + phosphate. The protein operates within metabolic intermediate biosynthesis; chorismate biosynthesis; chorismate from D-erythrose 4-phosphate and phosphoenolpyruvate: step 6/7. Functionally, catalyzes the transfer of the enolpyruvyl moiety of phosphoenolpyruvate (PEP) to the 5-hydroxyl of shikimate-3-phosphate (S3P) to produce enolpyruvyl shikimate-3-phosphate and inorganic phosphate. The polypeptide is 3-phosphoshikimate 1-carboxyvinyltransferase (Staphylococcus epidermidis (strain ATCC 35984 / DSM 28319 / BCRC 17069 / CCUG 31568 / BM 3577 / RP62A)).